A 110-amino-acid chain; its full sequence is Small ribosomal subunit protein uS10m (110 aa).

It belongs to the universal ribosomal protein uS10 family.

It localises to the mitochondrion. This Pisum sativum (Garden pea) protein is Small ribosomal subunit protein uS10m (RPS10).